Here is a 56-residue protein sequence, read N- to C-terminus: MAVQQNKSTRSKRGMRRSHHALRSVTISVDRTSGETHRRHCVTFDGFYRGRKMIEK.

The interval 1 to 35 (MAVQQNKSTRSKRGMRRSHHALRSVTISVDRTSGE) is disordered. Positions 9-22 (TRSKRGMRRSHHAL) are enriched in basic residues.

It belongs to the bacterial ribosomal protein bL32 family.

This is Large ribosomal subunit protein bL32 from Blochmanniella pennsylvanica (strain BPEN).